Here is a 28-residue protein sequence, read N- to C-terminus: Humanin-like 2 (28 aa).

It belongs to the humanin family. In terms of tissue distribution, highly expressed in testis. Also expressed in kidney, heart, skeletal muscles and brain.

It localises to the secreted. The protein resides in the cytoplasm. Functionally, plays a role as a neuroprotective and antiapoptotic factor. This Homo sapiens (Human) protein is Humanin-like 2.